The chain runs to 399 residues: Tyrosine--tRNA ligase 2 (399 aa).

A 'HIGH' region motif is present at residues 43 to 52; that stretch reads PTAPDLHLGH. A 'KMSKS' region motif is present at residues 227-231; it reads KMSKS. An ATP-binding site is contributed by Lys-230. One can recognise an S4 RNA-binding domain in the interval 338 to 398; that stretch reads ITLLDLCSVA…IGKRYKFRIG (61 aa).

It belongs to the class-I aminoacyl-tRNA synthetase family. TyrS type 2 subfamily. In terms of assembly, homodimer.

It localises to the cytoplasm. It carries out the reaction tRNA(Tyr) + L-tyrosine + ATP = L-tyrosyl-tRNA(Tyr) + AMP + diphosphate + H(+). In terms of biological role, catalyzes the attachment of tyrosine to tRNA(Tyr) in a two-step reaction: tyrosine is first activated by ATP to form Tyr-AMP and then transferred to the acceptor end of tRNA(Tyr). The polypeptide is Tyrosine--tRNA ligase 2 (Photorhabdus laumondii subsp. laumondii (strain DSM 15139 / CIP 105565 / TT01) (Photorhabdus luminescens subsp. laumondii)).